Here is a 491-residue protein sequence, read N- to C-terminus: Ketol-acid reductoisomerase (NADP(+)) (491 aa).

One can recognise a KARI N-terminal Rossmann domain in the interval 15 to 208; that stretch reads AQLGKCRFMG…GGHRAGVLES (194 aa). Residues 45–48, R68, R76, S78, and 108–110 each bind NADP(+); these read CGAQ and DKQ. Residue H132 is part of the active site. Residue G158 coordinates NADP(+). KARI C-terminal knotted domains are found at residues 209-344 and 345-484; these read SFVA…TAPQ and FEGK…MTDM. Mg(2+)-binding residues include D217, E221, E389, and E393. S414 contacts substrate.

This sequence belongs to the ketol-acid reductoisomerase family. Mg(2+) is required as a cofactor.

It carries out the reaction (2R)-2,3-dihydroxy-3-methylbutanoate + NADP(+) = (2S)-2-acetolactate + NADPH + H(+). The catalysed reaction is (2R,3R)-2,3-dihydroxy-3-methylpentanoate + NADP(+) = (S)-2-ethyl-2-hydroxy-3-oxobutanoate + NADPH + H(+). It participates in amino-acid biosynthesis; L-isoleucine biosynthesis; L-isoleucine from 2-oxobutanoate: step 2/4. It functions in the pathway amino-acid biosynthesis; L-valine biosynthesis; L-valine from pyruvate: step 2/4. Involved in the biosynthesis of branched-chain amino acids (BCAA). Catalyzes an alkyl-migration followed by a ketol-acid reduction of (S)-2-acetolactate (S2AL) to yield (R)-2,3-dihydroxy-isovalerate. In the isomerase reaction, S2AL is rearranged via a Mg-dependent methyl migration to produce 3-hydroxy-3-methyl-2-ketobutyrate (HMKB). In the reductase reaction, this 2-ketoacid undergoes a metal-dependent reduction by NADPH to yield (R)-2,3-dihydroxy-isovalerate. The sequence is that of Ketol-acid reductoisomerase (NADP(+)) from Salmonella schwarzengrund (strain CVM19633).